The following is a 93-amino-acid chain: MDKFVTHLGKIMPLRRSDVDTDQIIPAVYLKRVTRTGFEDGLFSAWREDPGFVLHNPAHAGATILVAGPNFGTGSSRQHAVWALRDWGFKVVI.

It belongs to the LeuD family. LeuD type 1 subfamily. As to quaternary structure, heterodimer of LeuC and LeuD.

It carries out the reaction (2R,3S)-3-isopropylmalate = (2S)-2-isopropylmalate. It functions in the pathway amino-acid biosynthesis; L-leucine biosynthesis; L-leucine from 3-methyl-2-oxobutanoate: step 2/4. Functionally, catalyzes the isomerization between 2-isopropylmalate and 3-isopropylmalate, via the formation of 2-isopropylmaleate. In Actinoplanes teichomyceticus, this protein is 3-isopropylmalate dehydratase small subunit (leuD).